A 144-amino-acid chain; its full sequence is Small ribosomal subunit protein bS16 (144 aa).

A disordered region spans residues 115 to 144 (NEPVAEAVTPKKKAKKDDAAAESTEAEAAE).

It belongs to the bacterial ribosomal protein bS16 family.

The sequence is that of Small ribosomal subunit protein bS16 from Nocardia farcinica (strain IFM 10152).